A 670-amino-acid chain; its full sequence is NADH-ubiquinone oxidoreductase chain 5 (670 aa).

The next 19 membrane-spanning stretches (helical) occupy residues 1–21 (MYIV…IFGH), 31–51 (IAVG…YEIL), 81–101 (LTSI…LYSM), 111–131 (TRFF…VTAD), 133–153 (FVQL…LINF), 178–198 (LFFG…SVIF), 211–231 (LLGY…IGVV), 251–271 (TPVS…FLVL), 283–303 (ILNI…TIGI), 311–331 (VIAY…GLLN), 339–359 (LTTH…VIHG), 375–395 (LMPL…GFPF), 421–441 (AIIG…LLIL), 462–482 (TNMV…GYVT), 519–539 (LLPL…YFNI), 566–586 (FDFL…YDVM), 594–614 (LWEK…FTAL), 629–649 (IVQT…TGFI), and 650–670 (YMEL…IKID).

The protein belongs to the complex I subunit 5 family.

The protein resides in the mitochondrion inner membrane. The catalysed reaction is a ubiquinone + NADH + 5 H(+)(in) = a ubiquinol + NAD(+) + 4 H(+)(out). In terms of biological role, core subunit of the mitochondrial membrane respiratory chain NADH dehydrogenase (Complex I) that is believed to belong to the minimal assembly required for catalysis. Complex I functions in the transfer of electrons from NADH to the respiratory chain. The immediate electron acceptor for the enzyme is believed to be ubiquinone. The sequence is that of NADH-ubiquinone oxidoreductase chain 5 (nad5) from Dictyostelium discoideum (Social amoeba).